The primary structure comprises 560 residues: Trafficking protein particle complex II-specific subunit 65 (560 aa).

The tract at residues 164 to 193 is disordered; that stretch reads SSKNTNNHLEKNNRATHRVSSKNSEVHEAD. Phosphoserine occurs at positions 393 and 398.

In terms of assembly, part of the multisubunit TRAPP (transport protein particle) II complex composed of BET3, BET5, TRS20, TRS23, TRS31, TRS33, TRS65, TRS120 and TRS130. Interacts directly with TRS120 and TRS130.

It is found in the cytoplasm. It localises to the golgi apparatus. The protein localises to the cis-Golgi network. Its pathway is glycan metabolism; beta-glucan biosynthesis. In terms of biological role, specific subunit of the TRAPP II complex, a highly conserved vesicle tethering complex that functions in the late Golgi as a guanine nucleotide exchanger (GEF) for the Golgi YPT1 GTPase. TRS65 plays a role in the YPT GEF activity of TRAPP II in concert with the two other TRAPP II-specific subunits TRS120 and TRS130. Involved in cell wall (1--&gt;6)-beta-glucan synthesis. This Saccharomyces cerevisiae (strain ATCC 204508 / S288c) (Baker's yeast) protein is Trafficking protein particle complex II-specific subunit 65 (TRS65).